A 196-amino-acid polypeptide reads, in one-letter code: Probable peptidyl-prolyl cis-trans isomerase (196 aa).

The signal sequence occupies residues 1-26; it reads MSFIRSALAAAAFVALSIGAVQTASA. The 166-residue stretch at 29–194 folds into the PPIase cyclophilin-type domain; sequence PENTVILKLK…KIIKATIEAD (166 aa).

The protein belongs to the cyclophilin-type PPIase family.

Its subcellular location is the periplasm. The catalysed reaction is [protein]-peptidylproline (omega=180) = [protein]-peptidylproline (omega=0). Its function is as follows. PPIases accelerate the folding of proteins. It catalyzes the cis-trans isomerization of proline imidic peptide bonds in oligopeptides. In Brucella melitensis biotype 1 (strain ATCC 23456 / CCUG 17765 / NCTC 10094 / 16M), this protein is Probable peptidyl-prolyl cis-trans isomerase (ppi).